Reading from the N-terminus, the 159-residue chain is Protein A40 (159 aa).

At 1-9 the chain is on the cytoplasmic side; sequence MNKHKTDYA. A helical; Signal-anchor for type II membrane protein membrane pass occupies residues 10-30; the sequence is GYACCVICGLIVGIIFTATLL. Over 31–159 the chain is Extracellular; that stretch reads KVVERKLVHT…TPKLHSCYTI (129 aa). In terms of domain architecture, C-type lectin spans 63–159; it reads YNNKCIHLST…TPKLHSCYTI (97 aa).

This sequence belongs to the poxviridae A40 protein family.

It localises to the host membrane. The protein is Protein A40 of Bos taurus (Bovine).